The chain runs to 80 residues: U19-lycotoxin-Ls1b (80 aa).

The N-terminal stretch at 1 to 22 (MSPKVQALIFIVGLITLLAAHA) is a signal peptide. Positions 23–34 (QEELSDNIESER) are excised as a propeptide. Intrachain disulfides connect C36/C50, C43/C55, C49/C66, and C57/C64.

This sequence belongs to the neurotoxin 02 (plectoxin) family. 05 (U19-lycotoxin) subfamily. In terms of tissue distribution, expressed by the venom gland.

The protein localises to the secreted. This is U19-lycotoxin-Ls1b from Lycosa singoriensis (Wolf spider).